Consider the following 426-residue polypeptide: Molybdopterin molybdenumtransferase 1 (426 aa).

The protein belongs to the MoeA family. It depends on Mg(2+) as a cofactor.

The enzyme catalyses adenylyl-molybdopterin + molybdate = Mo-molybdopterin + AMP + H(+). The protein operates within cofactor biosynthesis; molybdopterin biosynthesis. Catalyzes the insertion of molybdate into adenylated molybdopterin with the concomitant release of AMP. This Mycobacterium tuberculosis (strain ATCC 25618 / H37Rv) protein is Molybdopterin molybdenumtransferase 1 (moeA1).